Here is a 713-residue protein sequence, read N- to C-terminus: Phosphoribosylformylglycinamidine synthase subunit PurL (713 aa).

Basic and acidic residues predominate over residues 1–17 (MSLSPSDRELVTEELGR). Positions 1 to 20 (MSLSPSDRELVTEELGREPT) are disordered. H34 is a catalytic residue. Y37 contacts ATP. E85 lines the Mg(2+) pocket. Substrate-binding positions include 86 to 89 (SHNH) and R108. The Proton acceptor role is filled by H87. D109 is a Mg(2+) binding site. Position 233 (Q233) interacts with substrate. D261 serves as a coordination point for Mg(2+). 305-307 (ESQ) is a substrate binding site. ATP-binding residues include D480 and G517. A Mg(2+)-binding site is contributed by N518. Substrate is bound at residue S520.

Belongs to the FGAMS family. Monomer. Part of the FGAM synthase complex composed of 1 PurL, 1 PurQ and 2 PurS subunits.

The protein resides in the cytoplasm. It carries out the reaction N(2)-formyl-N(1)-(5-phospho-beta-D-ribosyl)glycinamide + L-glutamine + ATP + H2O = 2-formamido-N(1)-(5-O-phospho-beta-D-ribosyl)acetamidine + L-glutamate + ADP + phosphate + H(+). It participates in purine metabolism; IMP biosynthesis via de novo pathway; 5-amino-1-(5-phospho-D-ribosyl)imidazole from N(2)-formyl-N(1)-(5-phospho-D-ribosyl)glycinamide: step 1/2. Functionally, part of the phosphoribosylformylglycinamidine synthase complex involved in the purines biosynthetic pathway. Catalyzes the ATP-dependent conversion of formylglycinamide ribonucleotide (FGAR) and glutamine to yield formylglycinamidine ribonucleotide (FGAM) and glutamate. The FGAM synthase complex is composed of three subunits. PurQ produces an ammonia molecule by converting glutamine to glutamate. PurL transfers the ammonia molecule to FGAR to form FGAM in an ATP-dependent manner. PurS interacts with PurQ and PurL and is thought to assist in the transfer of the ammonia molecule from PurQ to PurL. The protein is Phosphoribosylformylglycinamidine synthase subunit PurL of Natronomonas pharaonis (strain ATCC 35678 / DSM 2160 / CIP 103997 / JCM 8858 / NBRC 14720 / NCIMB 2260 / Gabara) (Halobacterium pharaonis).